The following is a 309-amino-acid chain: NAD kinase 2 (309 aa).

D81 functions as the Proton acceptor in the catalytic mechanism. Residues 81–82 (DG), 155–156 (NE), D185, 196–201 (TAYALS), and N255 contribute to the NAD(+) site.

Belongs to the NAD kinase family. A divalent metal cation serves as cofactor.

It is found in the cytoplasm. It catalyses the reaction NAD(+) + ATP = ADP + NADP(+) + H(+). Its function is as follows. Involved in the regulation of the intracellular balance of NAD and NADP, and is a key enzyme in the biosynthesis of NADP. Catalyzes specifically the phosphorylation on 2'-hydroxyl of the adenosine moiety of NAD to yield NADP. This Gloeobacter violaceus (strain ATCC 29082 / PCC 7421) protein is NAD kinase 2.